The following is a 226-amino-acid chain: ATP synthase F(0) complex subunit a (226 aa).

Transmembrane regions (helical) follow at residues 11–31 (APSMMGLPIVVLIVMFPSILF), 68–88 (WALMLMSLILFIGSTNLLGLL), 97–117 (QLSMNLGMAIPLWAGTVITGF), 138–158 (IPMLVVIETISLFIQPMALAV), 164–184 (ITAGHLLIHLIGGATLALINI), and 189–209 (AFITFIILILLTILEFAVALI).

The protein belongs to the ATPase A chain family. As to quaternary structure, component of the ATP synthase complex composed at least of ATP5F1A/subunit alpha, ATP5F1B/subunit beta, ATP5MC1/subunit c (homooctomer), MT-ATP6/subunit a, MT-ATP8/subunit 8, ATP5ME/subunit e, ATP5MF/subunit f, ATP5MG/subunit g, ATP5MK/subunit k, ATP5MJ/subunit j, ATP5F1C/subunit gamma, ATP5F1D/subunit delta, ATP5F1E/subunit epsilon, ATP5PF/subunit F6, ATP5PB/subunit b, ATP5PD/subunit d, ATP5PO/subunit OSCP. ATP synthase complex consists of a soluble F(1) head domain (subunits alpha(3) and beta(3)) - the catalytic core - and a membrane F(0) domain - the membrane proton channel (subunits c, a, 8, e, f, g, k and j). These two domains are linked by a central stalk (subunits gamma, delta, and epsilon) rotating inside the F1 region and a stationary peripheral stalk (subunits F6, b, d, and OSCP). Interacts with DNAJC30; interaction is direct.

It localises to the mitochondrion inner membrane. It carries out the reaction H(+)(in) = H(+)(out). In terms of biological role, subunit a, of the mitochondrial membrane ATP synthase complex (F(1)F(0) ATP synthase or Complex V) that produces ATP from ADP in the presence of a proton gradient across the membrane which is generated by electron transport complexes of the respiratory chain. ATP synthase complex consist of a soluble F(1) head domain - the catalytic core - and a membrane F(1) domain - the membrane proton channel. These two domains are linked by a central stalk rotating inside the F(1) region and a stationary peripheral stalk. During catalysis, ATP synthesis in the catalytic domain of F(1) is coupled via a rotary mechanism of the central stalk subunits to proton translocation. With the subunit c (ATP5MC1), forms the proton-conducting channel in the F(0) domain, that contains two crucial half-channels (inlet and outlet) that facilitate proton movement from the mitochondrial intermembrane space (IMS) into the matrix. Protons are taken up via the inlet half-channel and released through the outlet half-channel, following a Grotthuss mechanism. This Canis lupus familiaris (Dog) protein is ATP synthase F(0) complex subunit a.